The primary structure comprises 833 residues: V-type proton ATPase 116 kDa subunit a 4 (833 aa).

Residues 1–390 (MASVFRSEEM…DAYGVGSYRE (390 aa)) lie on the Cytoplasmic side of the membrane. The helical transmembrane segment at 391–409 (INPAPYTIITFPFLFAVMF) threads the bilayer. Residues 410 to 411 (GD) lie on the Vacuolar side of the membrane. The chain crosses the membrane as a helical span at residues 412–428 (CGHGMVMLMAALWMVLN). Residues 429-443 (ERHLLAQKSTNEMWN) lie on the Cytoplasmic side of the membrane. The helical transmembrane segment at 444 to 473 (IFFNGRYLILLMGIFSIYTGLIYNDCFSKS) threads the bilayer. Over 474–538 (FNIFGSSWSV…ASNKLTFLNS (65 aa)) the chain is Vacuolar. Residues 539–558 (YKMKMSVILGIAHMIFGVIL) traverse the membrane as a helical segment. Residues 559–576 (SLFNHIYFRRTLNIILQF) lie on the Cytoplasmic side of the membrane. The chain crosses the membrane as a helical span at residues 577 to 597 (IPEMIFMLSLFGYLVFMIIFK). The Vacuolar segment spans residues 598–642 (WCRYDAHTSRKAPSILIHFIGMFLFDYDDSSNAPLYGHQQEVQTF). Residues 643–662 (FVIIALVSVPWMLLIKPFVL) traverse the membrane as a helical segment. Topologically, residues 663–720 (RAKHQKSQLQSFTIHEDAVEGDHSGHSSKKTAGAHGMKDGHEEEFNFGDIFVHQAIHT) are cytoplasmic. The tract at residues 681–700 (VEGDHSGHSSKKTAGAHGMK) is disordered. The chain crosses the membrane as a helical span at residues 721-745 (IEYCLGCISNTASYLRLWALSLAHA). The Vacuolar portion of the chain corresponds to 746 to 766 (ELSEVLWTMVMSIGLRLQGWA). A helical transmembrane segment spans residues 767 to 805 (GLVGVFIIFAVFAVLTVAILLVMEGLSAFLHALRLHWVE). Residues 806-833 (FQNKFYEGAGSKFSPFSFKHVLEGTAEE) lie on the Cytoplasmic side of the membrane.

It belongs to the V-ATPase 116 kDa subunit family. As to quaternary structure, V-ATPase is a heteromultimeric enzyme made up of two complexes: the ATP-hydrolytic V1 complex and the proton translocation V0 complex. The V1 complex consists of three catalytic AB heterodimers that form a heterohexamer, three peripheral stalks each consisting of EG heterodimers, one central rotor including subunits D and F, and the regulatory subunits C and H. The proton translocation complex V0 consists of the proton transport subunit a, a ring of proteolipid subunits c9c'', rotary subunit d, subunits e and f, and the accessory subunits ATP6AP1/Ac45 and ATP6AP2/PRR. Interacts with the V1 complex V-ATPase subunit A ATP6V1A. Interacts with the V0 complex V-ATPase subunit c ATP6V0C. As to expression, specifically expressed in kidney, but not in the heart, brain, spleen, lung, liver, muscle, or testis. Distribution within the kidney appears more widespread than that seen in man. High intensity staining at the surface of intercalated cells, with additional expression in the proximal tubule.

It is found in the apical cell membrane. The protein localises to the basolateral cell membrane. Its function is as follows. Subunit of the V0 complex of vacuolar(H+)-ATPase (V-ATPase), a multisubunit enzyme composed of a peripheral complex (V1) that hydrolyzes ATP and a membrane integral complex (V0) that translocates protons. V-ATPase is responsible for acidifying and maintaining the pH of intracellular compartments and in some cell types, is targeted to the plasma membrane, where it is responsible for acidifying the extracellular environment. Involved in normal vectorial acid transport into the urine by the kidney. The protein is V-type proton ATPase 116 kDa subunit a 4 (Atp6v0a4) of Mus musculus (Mouse).